The sequence spans 493 residues: ATP-dependent RNA helicase dbp3 (493 aa).

The tract at residues 1-38 (MTKRDYQNDTTAESRPTKKSKGEKKVKETKEKKEKKVK) is disordered. Residues 23–34 (EKKVKETKEKKE) are compositionally biased toward basic and acidic residues. Positions 97–105 (SFKSPTSIQ) match the Q motif motif. The Helicase ATP-binding domain occupies 109–285 (WPLLFGGRDV…STFMSSPVTV (177 aa)). 122-129 (AETGSGKT) serves as a coordination point for ATP. A DEAD box motif is present at residues 232–235 (DEAD). The Helicase C-terminal domain occupies 316–462 (RLVQLLKQHQ…EVPEELLKFG (147 aa)).

This sequence belongs to the DEAD box helicase family. DDX5/DBP2 subfamily.

It is found in the nucleus. The protein localises to the nucleolus. It carries out the reaction ATP + H2O = ADP + phosphate + H(+). In terms of biological role, ATP-dependent RNA helicase required for 60S ribosomal subunit synthesis. Involved in efficient pre-rRNA processing, predominantly at site A3, which is necessary for the normal formation of 25S and 5.8S rRNAs. This chain is ATP-dependent RNA helicase dbp3 (dbp3), found in Aspergillus terreus (strain NIH 2624 / FGSC A1156).